We begin with the raw amino-acid sequence, 241 residues long: Megakaryocyte and platelet inhibitory receptor G6b (241 aa).

The signal sequence occupies residues 1–17; the sequence is MAVFLQLLPLLLSRAQG. Over 18–142 the chain is Extracellular; sequence NPGASLDGRP…GPTHGSVYPQ (125 aa). The N-linked (GlcNAc...) asparagine glycan is linked to asparagine 32. Residues 143 to 163 form a helical membrane-spanning segment; the sequence is LLIPLLGAGLVLGLGALGLVW. At 164 to 241 the chain is on the cytoplasmic side; it reads WLHRRLPPQP…DASTIYAVVV (78 aa). Short sequence motifs (ITIM motif) lie at residues 209-214 and 235-240; these read LLYADL and TIYAVV. Position 211 is a phosphotyrosine (tyrosine 211).

As to quaternary structure, interacts (via ITIM motif) with PTPN6 and PTPN11. Binds to heparin. All isoforms are N-glycosylated. Post-translationally, isoform E is O-glycosylated. In terms of processing, phosphorylated. In terms of tissue distribution, expressed in platelets. Expressed in a restricted set of hematopoietic cell lines including the erythroleukemia cell line K-562 and the T-cell leukemia cell lines MOLT-4 and Jurkat. Not detected in the monocyte-like cell line U-937, the B-cell-like cell line Raji, the fibroblast cell lines TK and HeLa, or the natural killer cell lines NKL, NK 62 and YT.

It localises to the endoplasmic reticulum. It is found in the golgi apparatus. The protein localises to the cell membrane. In terms of biological role, inhibitory receptor that acts as a critical regulator of hematopoietic lineage differentiation, megakaryocyte function and platelet production. Inhibits platelet aggregation and activation by agonists such as ADP and collagen-related peptide. This regulation of megakaryocate function as well as platelet production ann activation is done through the inhibition (via the 2 ITIM motifs) of the receptors CLEC1B and GP6:FcRgamma signaling. Appears to operate in a calcium-independent manner. Its function is as follows. Isoform B, displayed in this entry, is the only isoform to contain both a transmembrane region and 2 immunoreceptor tyrosine-based inhibitor motifs (ITIMs) and, thus, the only one which probably has a role of inhibitory receptor. Isoform A may be the activating counterpart of isoform B. This is Megakaryocyte and platelet inhibitory receptor G6b from Homo sapiens (Human).